We begin with the raw amino-acid sequence, 162 residues long: Large ribosomal subunit protein bL17 (162 aa).

The segment at 126–162 (ATAKKATRTRRSKKSAAATEAPAAPAAETTEEAPKAE) is disordered. A compositionally biased stretch (basic residues) spans 130–139 (KATRTRRSKK). Over residues 140-153 (SAAATEAPAAPAAE) the composition is skewed to low complexity.

Belongs to the bacterial ribosomal protein bL17 family. Part of the 50S ribosomal subunit. Contacts protein L32.

The chain is Large ribosomal subunit protein bL17 from Phocaeicola vulgatus (strain ATCC 8482 / DSM 1447 / JCM 5826 / CCUG 4940 / NBRC 14291 / NCTC 11154) (Bacteroides vulgatus).